A 395-amino-acid polypeptide reads, in one-letter code: Chorismate synthase (395 aa).

The protein belongs to the chorismate synthase family. Homotetramer. FMNH2 is required as a cofactor.

The enzyme catalyses 5-O-(1-carboxyvinyl)-3-phosphoshikimate = chorismate + phosphate. It functions in the pathway metabolic intermediate biosynthesis; chorismate biosynthesis; chorismate from D-erythrose 4-phosphate and phosphoenolpyruvate: step 7/7. This is Chorismate synthase from Schizosaccharomyces pombe (strain 972 / ATCC 24843) (Fission yeast).